A 163-amino-acid chain; its full sequence is uncharacterized protein (163 aa).

This is an uncharacterized protein from Schizosaccharomyces pombe (strain 972 / ATCC 24843) (Fission yeast).